The chain runs to 193 residues: Ion-translocating oxidoreductase complex subunit A (193 aa).

A run of 6 helical transmembrane segments spans residues 4–24 (LLLI…RFLG), 39–59 (LGMG…TWVL), 72–92 (LQTI…EMIV), 102–122 (SLGI…LAVL), 134–154 (LVFA…FAGL), and 171–191 (PIEL…AGLV).

The protein belongs to the NqrDE/RnfAE family. As to quaternary structure, the complex is composed of six subunits: RnfA, RnfB, RnfC, RnfD, RnfE and RnfG.

The protein resides in the cell inner membrane. Functionally, part of a membrane-bound complex that couples electron transfer with translocation of ions across the membrane. This Syntrophotalea carbinolica (strain DSM 2380 / NBRC 103641 / GraBd1) (Pelobacter carbinolicus) protein is Ion-translocating oxidoreductase complex subunit A.